The chain runs to 129 residues: MAREPQRVKRRERKNISAGVAHVNASFNNTMITITDAQGNAISWSSAGMMGFKGSRKSTPYAAQVAAEDAGKKAAEHGVRTLEVEVKGPGSGRESALRALQAVGFHITSIRDVTPIPHNGVRPSKRRRV.

Belongs to the universal ribosomal protein uS11 family. Part of the 30S ribosomal subunit. Interacts with proteins S7 and S18. Binds to IF-3.

Functionally, located on the platform of the 30S subunit, it bridges several disparate RNA helices of the 16S rRNA. Forms part of the Shine-Dalgarno cleft in the 70S ribosome. The chain is Small ribosomal subunit protein uS11 from Zymomonas mobilis subsp. mobilis (strain ATCC 31821 / ZM4 / CP4).